The sequence spans 121 residues: Large ribosomal subunit protein bL19 (121 aa).

The protein belongs to the bacterial ribosomal protein bL19 family.

Its function is as follows. This protein is located at the 30S-50S ribosomal subunit interface and may play a role in the structure and function of the aminoacyl-tRNA binding site. This Borreliella burgdorferi (strain ZS7) (Borrelia burgdorferi) protein is Large ribosomal subunit protein bL19.